We begin with the raw amino-acid sequence, 352 residues long: DNA polymerase IV (352 aa).

The UmuC domain maps to isoleucine 6–glycine 186. Mg(2+)-binding residues include aspartate 10 and aspartate 104. Glutamate 105 is an active-site residue.

It belongs to the DNA polymerase type-Y family. Monomer. It depends on Mg(2+) as a cofactor.

Its subcellular location is the cytoplasm. The catalysed reaction is DNA(n) + a 2'-deoxyribonucleoside 5'-triphosphate = DNA(n+1) + diphosphate. Its function is as follows. Poorly processive, error-prone DNA polymerase involved in untargeted mutagenesis. Copies undamaged DNA at stalled replication forks, which arise in vivo from mismatched or misaligned primer ends. These misaligned primers can be extended by PolIV. Exhibits no 3'-5' exonuclease (proofreading) activity. May be involved in translesional synthesis, in conjunction with the beta clamp from PolIII. This Neisseria meningitidis serogroup C / serotype 2a (strain ATCC 700532 / DSM 15464 / FAM18) protein is DNA polymerase IV.